Consider the following 1026-residue polypeptide: P3N-PIPO polyprotein (1026 aa).

A Peptidase S30 domain is found at 165-308; sequence RMSEASLQLF…KEQSNEIVHY (144 aa). Active-site for P1 proteinase activity residues include H216, D225, and S259. An Involved in interaction with stylet and aphid transmission motif is present at residues 360–363; that stretch reads KITC. The Involved in virions binding and aphid transmission signature appears at 618-620; that stretch reads PTK. One can recognise a Peptidase C6 domain in the interval 644–766; that stretch reads MFIAKAGYCY…DSSMKTYLVG (123 aa). Active-site for helper component proteinase activity residues include C652 and H725.

The protein belongs to the potyviridae P3N-PIPO polyprotein family. As to quaternary structure, interacts (via PIPO domain) with host PCaP1 protein; this interaction may help to anchor the movement complex to the plasma membrane from which the complex could move to the plasmodesmata. Post-translationally, potyviral RNA is expressed as two polyproteins which undergo post-translational proteolytic processing. Genome polyprotein is processed by NIa-pro, P1 and HC-pro proteinases resulting in the production of at least ten individual proteins. P3N-PIPO is cleaved by P1 and HC-pro proteinases resulting in the production of three individual proteins. The P1 proteinase and the HC-pro cleave only their respective C-termini autocatalytically.

The protein resides in the host cell junction. It is found in the host plasmodesma. The catalysed reaction is Hydrolyzes a Gly-|-Gly bond at its own C-terminus, commonly in the sequence -Tyr-Xaa-Val-Gly-|-Gly, in the processing of the potyviral polyprotein.. In terms of biological role, required for aphid transmission and also has proteolytic activity. Only cleaves a Gly-Gly dipeptide at its own C-terminus. Interacts with virions and aphid stylets. Acts as a suppressor of RNA-mediated gene silencing, also known as post-transcriptional gene silencing (PTGS), a mechanism of plant viral defense that limits the accumulation of viral RNAs. May have RNA-binding activity. Its function is as follows. Allows efficient cell to cell propagation, by bypassing the host cell wall barrier. Transports viral genome to neighboring plant cells directly through plasmosdesmata, without any budding. The polypeptide is P3N-PIPO polyprotein (Prunus armeniaca (Apricot)).